A 660-amino-acid chain; its full sequence is Replication protein E1 (660 aa).

Residues M1–I60 are disordered. Residues S39–F54 are compositionally biased toward acidic residues. The Nuclear localization signal signature appears at K87–K89. Phosphoserine; by host occurs at positions 93, 97, 109, and 122. A Nuclear export signal motif is present at residues L108–L117. A disordered region spans residues L128–T196. Residues Y136 to Q163 are compositionally biased toward polar residues. Residues S169–G186 show a composition bias toward basic and acidic residues. The DNA-binding region stretch occupies residues E197–E363. An SF3 helicase domain is found at V462–V612. Residue G488–S495 participates in ATP binding. A Glycyl lysine isopeptide (Lys-Gly) (interchain with G-Cter in SUMO) cross-link involves residue K569. Positions D635–E644 are enriched in acidic residues. The segment at D635 to V660 is disordered.

This sequence belongs to the papillomaviridae E1 protein family. In terms of assembly, can form hexamers. Interacts with E2 protein; this interaction increases E1 DNA binding specificity. Interacts with host DNA polymerase subunit POLA2. Interacts with host single stranded DNA-binding protein RPA1. Interacts with host TOP1; this interaction stimulates the enzymatic activity of TOP1. Post-translationally, phosphorylated. Sumoylated.

The protein resides in the host nucleus. It catalyses the reaction Couples ATP hydrolysis with the unwinding of duplex DNA by translocating in the 3'-5' direction.. The enzyme catalyses ATP + H2O = ADP + phosphate + H(+). Its function is as follows. ATP-dependent DNA 3'-5' helicase required for initiation of viral DNA replication. It forms a complex with the viral E2 protein. The E1-E2 complex binds to the replication origin which contains binding sites for both proteins. During the initial step, a dimer of E1 interacts with a dimer of protein E2 leading to a complex that binds the viral origin of replication with high specificity. Then, a second dimer of E1 displaces the E2 dimer in an ATP-dependent manner to form the E1 tetramer. Following this, two E1 monomers are added to each half of the site, which results in the formation of two E1 trimers on the viral ori. Subsequently, two hexamers will be created. The double hexamer acts as a bi-directional helicase machinery and unwinds the viral DNA and then recruits the host DNA polymerase to start replication. The protein is Replication protein E1 of Human papillomavirus 29.